The following is a 439-amino-acid chain: Histidine--tRNA ligase (439 aa).

This sequence belongs to the class-II aminoacyl-tRNA synthetase family. Homodimer.

It localises to the cytoplasm. The enzyme catalyses tRNA(His) + L-histidine + ATP = L-histidyl-tRNA(His) + AMP + diphosphate + H(+). The protein is Histidine--tRNA ligase of Clostridium tetani (strain Massachusetts / E88).